The following is a 554-amino-acid chain: Serine/threonine-protein phosphatase 2B catalytic subunit (554 aa).

Positions 119, 121, and 147 each coordinate Fe cation. Residues D147 and N179 each coordinate Zn(2+). The active-site Proton donor is the H180. Positions 228 and 310 each coordinate Zn(2+). Residues 411–433 form a disordered region; sequence LKESAPTQHKQPAPSENENKADQ. Polar residues predominate over residues 415–426; it reads APTQHKQPAPSE.

This sequence belongs to the PPP phosphatase family. PP-2B subfamily. Composed of two components (A and B), the A component is the catalytic subunit and the B component confers calcium sensitivity. Fe(3+) serves as cofactor. Zn(2+) is required as a cofactor.

The enzyme catalyses O-phospho-L-seryl-[protein] + H2O = L-seryl-[protein] + phosphate. The catalysed reaction is O-phospho-L-threonyl-[protein] + H2O = L-threonyl-[protein] + phosphate. In terms of biological role, calcium-dependent, calmodulin-stimulated protein phosphatase. This subunit may have a role in the calmodulin activation of calcineurin. Appears to be involved in cytokinesis, mating, transport, nuclear and spindle pole body positioning, and cell shape. The protein is Serine/threonine-protein phosphatase 2B catalytic subunit (ppb1) of Schizosaccharomyces pombe (strain 972 / ATCC 24843) (Fission yeast).